A 618-amino-acid chain; its full sequence is Sodium-coupled monocarboxylate transporter 2 (618 aa).

The Extracellular portion of the chain corresponds to 1-9; sequence MEVKNFAVW. Residues 10–30 form a helical membrane-spanning segment; the sequence is DYVVFAALFFISSGIGVFFAI. Over 31-47 the chain is Cytoplasmic; that stretch reads KERKKATSREFLVGGRQ. Residues 48 to 68 form a helical membrane-spanning segment; the sequence is MSFGPVGLSLTASFMSAVTVL. Topologically, residues 69 to 82 are extracellular; sequence GTPSEVYRFGASFL. A helical membrane pass occupies residues 83–103; the sequence is VFFIAYLFVILLTSELFLPVF. Over 104–128 the chain is Cytoplasmic; the sequence is YRSGITSTYEYLQLRFNKPVRYAAT. Residues 129–149 form a helical membrane-spanning segment; sequence VIYIVQTILYTGVVVYAPALA. The Extracellular segment spans residues 150 to 157; that stretch reads LNQVTGFD. The helical transmembrane segment at 158–178 threads the bilayer; sequence LWGSVFATGIVCTFYCTLGGL. Topologically, residues 179–180 are cytoplasmic; that stretch reads KA. Residues 181 to 201 traverse the membrane as a helical segment; that stretch reads VVWTDAFQMVVMIVGFLTVLI. The Extracellular portion of the chain corresponds to 202 to 235; it reads QGSTHAGGFHNVLEQSTNGSRLHIFDFDVDPLRR. A helical transmembrane segment spans residues 236 to 256; sequence HTFWTITVGGTFTWLGIYGVN. Residues 257–275 are Cytoplasmic-facing; sequence QSTIQRCISCKTEKHAKLA. A helical transmembrane segment spans residues 276-296; sequence LYFNLLGLWIILVCAVFSGLI. Residues 297-321 lie on the Extracellular side of the membrane; the sequence is MYSHFKDCDPWTSGIISAPDQLMPY. A helical membrane pass occupies residues 322–342; that stretch reads FVMEIFATMPGLPGLFVACAF. At 343–385 the chain is on the cytoplasmic side; that stretch reads SGTLSTVASSINALATVTFEDFVKSCFPHLSDKLSTWISKGLC. Residues 386–406 form a helical membrane-spanning segment; it reads LLFGVMCTSMAVAASVMGGVV. The Extracellular segment spans residues 407–411; the sequence is QASLS. A helical transmembrane segment spans residues 412–432; the sequence is IHGMCGGPMLGLFSLGIVFPF. At 433-437 the chain is on the cytoplasmic side; it reads VNWKG. A helical membrane pass occupies residues 438–458; that stretch reads ALGGLLTGITLSFWVAIGAFI. The Extracellular portion of the chain corresponds to 459–504; that stretch reads YPAPASKTWPLPLSTDQCIKSNVTATGPPVLSSRPGIADTWYSISY. N-linked (GlcNAc...) asparagine glycosylation is present at Asn-480. The chain crosses the membrane as a helical span at residues 505 to 525; that stretch reads LYYSAVGCLGCIVAGVIISLI. The Cytoplasmic segment spans residues 526–618; the sequence is TGRQRGEDIQ…NNMAFETTHF (93 aa).

Belongs to the sodium:solute symporter (SSF) (TC 2.A.21) family.

It localises to the apical cell membrane. It catalyses the reaction (S)-lactate(out) + Na(+)(out) = (S)-lactate(in) + Na(+)(in). It carries out the reaction nicotinate(out) + Na(+)(out) = nicotinate(in) + Na(+)(in). The enzyme catalyses pyruvate(out) + Na(+)(out) = pyruvate(in) + Na(+)(in). The catalysed reaction is propanoate(out) + Na(+)(out) = propanoate(in) + Na(+)(in). It catalyses the reaction butanoate(out) + Na(+)(out) = butanoate(in) + Na(+)(in). It carries out the reaction acetoacetate(out) + Na(+)(out) = acetoacetate(in) + Na(+)(in). Its activity is regulated as follows. Cotransport of monocarboxylates and nicotinate strongly inhibited by ibuprofen, fenoprofen and ketoprofen. Acts as an electroneutral and low-affinity sodium (Na(+))-dependent sodium-coupled solute transporter. Catalyzes the transport across the plasma membrane of many monocarboxylates such as lactate, pyruvate, nicotinate, propionate, butyrate and beta-D-hydroxybutyrate. May be responsible for the first step of reabsorption of monocarboxylates from the lumen of the proximal tubule of the kidney and the small intestine. May play also a role in monocarboxylates transport in the retina. The polypeptide is Sodium-coupled monocarboxylate transporter 2 (Homo sapiens (Human)).